Here is a 373-residue protein sequence, read N- to C-terminus: Indole glucosinolate O-methyltransferase 1 (373 aa).

S-adenosyl-L-homocysteine contacts are provided by G217, D240, D260, M261, and K274. H278 serves as the catalytic Proton acceptor.

This sequence belongs to the class I-like SAM-binding methyltransferase superfamily. Cation-independent O-methyltransferase family. In terms of assembly, interacts with B'GAMMA.

It functions in the pathway secondary metabolite biosynthesis. Involved in indole glucosinolate biosynthesis. Catalyzes methoxylation reactions of the glucosinolate indole ring. Converts the hydroxy intermediates 4-hydroxy-indol-3-yl-methylglucosinolate (4OH-I3M) and 1-hydroxy-indol-3-yl-methylglucosinolate (1OH-I3M) to 4-methoxy-indol-3-yl-methylglucosinolate (4MO-I3M) and 1-methoxy-indol-3-yl-methylglucosinolate (1MO-I3M), respectively. This is Indole glucosinolate O-methyltransferase 1 from Arabidopsis thaliana (Mouse-ear cress).